We begin with the raw amino-acid sequence, 432 residues long: Adenylosuccinate synthetase (432 aa).

GTP is bound by residues 12–18 (GDEGKGK) and 40–42 (GHT). The active-site Proton acceptor is Asp-13. The Mg(2+) site is built by Asp-13 and Gly-40. IMP contacts are provided by residues 13–16 (DEGK), 38–41 (NAGH), Thr-132, Arg-146, Gln-226, Thr-241, and Arg-305. The active-site Proton donor is His-41. 301 to 307 (VVTGRKR) lines the substrate pocket. GTP is bound by residues Arg-307, 333-335 (KLD), and 415-417 (STS).

The protein belongs to the adenylosuccinate synthetase family. In terms of assembly, homodimer. Mg(2+) is required as a cofactor.

The protein localises to the cytoplasm. It carries out the reaction IMP + L-aspartate + GTP = N(6)-(1,2-dicarboxyethyl)-AMP + GDP + phosphate + 2 H(+). It participates in purine metabolism; AMP biosynthesis via de novo pathway; AMP from IMP: step 1/2. Functionally, plays an important role in the de novo pathway of purine nucleotide biosynthesis. Catalyzes the first committed step in the biosynthesis of AMP from IMP. The polypeptide is Adenylosuccinate synthetase (Mesorhizobium japonicum (strain LMG 29417 / CECT 9101 / MAFF 303099) (Mesorhizobium loti (strain MAFF 303099))).